The following is a 275-amino-acid chain: Ribosomal RNA small subunit methyltransferase A (275 aa).

Residues N20, L22, G47, E68, D90, and N110 each coordinate S-adenosyl-L-methionine.

Belongs to the class I-like SAM-binding methyltransferase superfamily. rRNA adenine N(6)-methyltransferase family. RsmA subfamily.

It is found in the cytoplasm. The catalysed reaction is adenosine(1518)/adenosine(1519) in 16S rRNA + 4 S-adenosyl-L-methionine = N(6)-dimethyladenosine(1518)/N(6)-dimethyladenosine(1519) in 16S rRNA + 4 S-adenosyl-L-homocysteine + 4 H(+). Its function is as follows. Specifically dimethylates two adjacent adenosines (A1518 and A1519) in the loop of a conserved hairpin near the 3'-end of 16S rRNA in the 30S particle. May play a critical role in biogenesis of 30S subunits. The sequence is that of Ribosomal RNA small subunit methyltransferase A from Chlorobaculum tepidum (strain ATCC 49652 / DSM 12025 / NBRC 103806 / TLS) (Chlorobium tepidum).